Here is a 300-residue protein sequence, read N- to C-terminus: Succinate--CoA ligase [ADP-forming] subunit alpha (300 aa).

Residues threonine 17–threonine 20, lysine 43, and isoleucine 96–glutamate 98 contribute to the CoA site. Tyrosine 159 serves as a coordination point for substrate. The active-site Tele-phosphohistidine intermediate is histidine 247.

It belongs to the succinate/malate CoA ligase alpha subunit family. As to quaternary structure, heterotetramer of two alpha and two beta subunits.

The enzyme catalyses succinate + ATP + CoA = succinyl-CoA + ADP + phosphate. It carries out the reaction GTP + succinate + CoA = succinyl-CoA + GDP + phosphate. It participates in carbohydrate metabolism; tricarboxylic acid cycle; succinate from succinyl-CoA (ligase route): step 1/1. Functionally, succinyl-CoA synthetase functions in the citric acid cycle (TCA), coupling the hydrolysis of succinyl-CoA to the synthesis of either ATP or GTP and thus represents the only step of substrate-level phosphorylation in the TCA. The alpha subunit of the enzyme binds the substrates coenzyme A and phosphate, while succinate binding and nucleotide specificity is provided by the beta subunit. This chain is Succinate--CoA ligase [ADP-forming] subunit alpha, found in Bacillus subtilis (strain 168).